The chain runs to 431 residues: Enolase (431 aa).

A (2R)-2-phosphoglycerate-binding site is contributed by Gln-167. The Proton donor role is filled by Glu-209. 3 residues coordinate Mg(2+): Asp-246, Glu-289, and Asp-316. Positions 341, 370, 371, and 392 each coordinate (2R)-2-phosphoglycerate. Lys-341 functions as the Proton acceptor in the catalytic mechanism.

It belongs to the enolase family. As to quaternary structure, component of the RNA degradosome, a multiprotein complex involved in RNA processing and mRNA degradation. Requires Mg(2+) as cofactor.

The protein localises to the cytoplasm. Its subcellular location is the secreted. The protein resides in the cell surface. It carries out the reaction (2R)-2-phosphoglycerate = phosphoenolpyruvate + H2O. It participates in carbohydrate degradation; glycolysis; pyruvate from D-glyceraldehyde 3-phosphate: step 4/5. Its function is as follows. Catalyzes the reversible conversion of 2-phosphoglycerate (2-PG) into phosphoenolpyruvate (PEP). It is essential for the degradation of carbohydrates via glycolysis. The chain is Enolase from Shewanella putrefaciens (strain CN-32 / ATCC BAA-453).